The following is a 608-amino-acid chain: Isocitrate dehydrogenase kinase/phosphatase (608 aa).

Residues 327 to 333 (APGIKGL) and lysine 348 each bind ATP. The active site involves aspartate 383. A disordered region spans residues 589–608 (FDSTPDAGDGDSAGDAQRAA).

This sequence belongs to the AceK family.

It localises to the cytoplasm. The enzyme catalyses L-seryl-[isocitrate dehydrogenase] + ATP = O-phospho-L-seryl-[isocitrate dehydrogenase] + ADP + H(+). Functionally, bifunctional enzyme which can phosphorylate or dephosphorylate isocitrate dehydrogenase (IDH) on a specific serine residue. This is a regulatory mechanism which enables bacteria to bypass the Krebs cycle via the glyoxylate shunt in response to the source of carbon. When bacteria are grown on glucose, IDH is fully active and unphosphorylated, but when grown on acetate or ethanol, the activity of IDH declines drastically concomitant with its phosphorylation. This Burkholderia ambifaria (strain MC40-6) protein is Isocitrate dehydrogenase kinase/phosphatase.